Here is a 258-residue protein sequence, read N- to C-terminus: Spindlin-2A (258 aa).

Residues 1–23 (MKTPNAQEAEGQQTRAAAGRATG) show a composition bias toward low complexity. The disordered stretch occupies residues 1–49 (MKTPNAQEAEGQQTRAAAGRATGSANMTKKKVSQKKQRGRPSSQPRRNI). Positions 28–39 (TKKKVSQKKQRG) are enriched in basic residues. Tudor-like domain regions lie at residues 50–99 (VGCR…LELH), 129–178 (IGKA…YQLL), and 210–255 (IGKH…YDLV). Histone H3K4me3 and H3R8me2a binding stretches follow at residues E138 and 246–248 (DFH).

This sequence belongs to the SPIN/STSY family. As to quaternary structure, interacts with C11orf84/SPINDOC.

The protein localises to the nucleus. May be involved in the regulation of cell cycle progression. Exhibits H3K4me3-binding activity. In Homo sapiens (Human), this protein is Spindlin-2A (SPIN2A).